Consider the following 484-residue polypeptide: Glutamyl-tRNA(Gln) amidotransferase subunit A (484 aa).

Residues K76 and S151 each act as charge relay system in the active site. The active-site Acyl-ester intermediate is S175.

It belongs to the amidase family. GatA subfamily. In terms of assembly, heterotrimer of A, B and C subunits.

The enzyme catalyses L-glutamyl-tRNA(Gln) + L-glutamine + ATP + H2O = L-glutaminyl-tRNA(Gln) + L-glutamate + ADP + phosphate + H(+). Functionally, allows the formation of correctly charged Gln-tRNA(Gln) through the transamidation of misacylated Glu-tRNA(Gln) in organisms which lack glutaminyl-tRNA synthetase. The reaction takes place in the presence of glutamine and ATP through an activated gamma-phospho-Glu-tRNA(Gln). The chain is Glutamyl-tRNA(Gln) amidotransferase subunit A from Hahella chejuensis (strain KCTC 2396).